A 172-amino-acid chain; its full sequence is Probable phosphatase YqeG (172 aa).

In terms of biological role, has low dephosphorylation activity on GMP and glucose-6-phosphate. The sequence is that of Probable phosphatase YqeG (yqeG) from Bacillus subtilis (strain 168).